A 796-amino-acid chain; its full sequence is Protocadherin beta-3 (796 aa).

Residues Met1–Ala26 form the signal peptide. The Extracellular portion of the chain corresponds to Gly27 to Leu690. 5 consecutive Cadherin domains span residues Val35–Phe133, Met138–Phe242, Tyr247–Leu347, Val352–Phe451, and Tyr456–Val561. Residue Asn169 is glycosylated (N-linked (GlcNAc...) asparagine). Asn418 and Asn436 each carry an N-linked (GlcNAc...) asparagine glycan. Asn567 is a glycosylation site (N-linked (GlcNAc...) asparagine). A Cadherin 6 domain is found at Gly568–Leu671. A helical membrane pass occupies residues Val691–Val711. The Cytoplasmic portion of the chain corresponds to Arg712–Ser796.

The protein resides in the cell membrane. Functionally, potential calcium-dependent cell-adhesion protein. May be involved in the establishment and maintenance of specific neuronal connections in the brain. The chain is Protocadherin beta-3 (PCDHB3) from Pan troglodytes (Chimpanzee).